Reading from the N-terminus, the 453-residue chain is Serine/threonine-protein phosphatase 2A 55 kDa regulatory subunit B delta isoform (453 aa).

WD repeat units lie at residues 32-71, 97-138, 181-219, and 230-270; these read AEADIISTVEFNYSGDLLATGDKGGRVVIFQREQENKSRP, EIEE…KRAE, AHTYHINSISVNSDHETYLSADDLRINLWHLEITDRSFN, and ELTE…LCDR. Residue Ser285 is modified to Phosphoserine. WD repeat units lie at residues 289-327, 344-385, and 420-452; these read EIISSISDVKFSHSGRYMMTRDYLSVKVWDLNMESRPVE, ENDC…DVTL, and DFNKKILHTAWHPVDNVIAVAATNNLYIFQDKI. A Phosphotyrosine modification is found at Tyr305. A Phosphothreonine modification is found at Thr308.

Belongs to the phosphatase 2A regulatory subunit B family. As to quaternary structure, PP2A consists of a common heterodimeric core enzyme, composed of a 36 kDa catalytic subunit (subunit C) and a 65 kDa constant regulatory subunit (PR65 or subunit A), that associates with a variety of regulatory subunits. Proteins that associate with the core dimer include three families of regulatory subunits B (the R2/B/PR55/B55, R3/B''/PR72/PR130/PR59 and R5/B'/B56 families), the 48 kDa variable regulatory subunit, viral proteins, and cell signaling molecules. Interacts with ENSA (when phosphorylated at 'Ser-67') and ARPP19 (when phosphorylated at 'Ser-62'), leading to inhibit PP2A activity. Interacts with IER5.

Its subcellular location is the cytoplasm. Functionally, substrate-recognition subunit of protein phosphatase 2A (PP2A) that plays a key role in cell cycle by controlling mitosis entry and exit. Involved in chromosome clustering during late mitosis by mediating dephosphorylation of MKI67. The activity of PP2A complexes containing PPP2R2D (PR55-delta) fluctuate during the cell cycle: the activity is high in interphase and low in mitosis. This chain is Serine/threonine-protein phosphatase 2A 55 kDa regulatory subunit B delta isoform (PPP2R2D), found in Homo sapiens (Human).